A 499-amino-acid polypeptide reads, in one-letter code: Glycerol kinase (499 aa).

An ADP-binding site is contributed by T15. ATP-binding residues include T15, T16, and S17. T15 is a binding site for sn-glycerol 3-phosphate. R19 provides a ligand contact to ADP. R85, E86, Y137, and D246 together coordinate sn-glycerol 3-phosphate. The glycerol site is built by R85, E86, Y137, D246, and Q247. Residues T268 and G311 each coordinate ADP. 4 residues coordinate ATP: T268, G311, Q315, and G412. ADP is bound by residues G412 and N416.

It belongs to the FGGY kinase family.

The catalysed reaction is glycerol + ATP = sn-glycerol 3-phosphate + ADP + H(+). It participates in polyol metabolism; glycerol degradation via glycerol kinase pathway; sn-glycerol 3-phosphate from glycerol: step 1/1. With respect to regulation, inhibited by fructose 1,6-bisphosphate (FBP). Functionally, key enzyme in the regulation of glycerol uptake and metabolism. Catalyzes the phosphorylation of glycerol to yield sn-glycerol 3-phosphate. In Parabacteroides distasonis (strain ATCC 8503 / DSM 20701 / CIP 104284 / JCM 5825 / NCTC 11152), this protein is Glycerol kinase.